Consider the following 69-residue polypeptide: Small ribosomal subunit protein uS14 (69 aa).

Zn(2+) contacts are provided by Cys33, Cys36, Cys51, and Cys54.

It belongs to the universal ribosomal protein uS14 family. Zinc-binding uS14 subfamily. Part of the 30S ribosomal subunit. Requires Zn(2+) as cofactor.

Its function is as follows. Binds 16S rRNA, required for the assembly of 30S particles. The polypeptide is Small ribosomal subunit protein uS14 (Nanoarchaeum equitans (strain Kin4-M)).